We begin with the raw amino-acid sequence, 48 residues long: MSGGGVFTDILAAAGRIFEVMVEGHWETVGMLFDSLGKGTMRINRNAY.

Residue histidine 25 coordinates a bacteriochlorophyll c.

The protein belongs to the BChl C/E-binding protein family.

The protein resides in the chlorosome. Its subcellular location is the chlorosome envelope. Component of the photosynthetic apparatus. The light harvesting B740 complex binds bacteriochlorophyll c. The sequence is that of Bacteriochlorophyll c-binding protein (csmA) from Chlorobaculum thiosulfatiphilum (Chlorobium limicola f.sp. thiosulfatophilum).